A 473-amino-acid polypeptide reads, in one-letter code: Cysteine--tRNA ligase (473 aa).

C27 lines the Zn(2+) pocket. The 'HIGH' region signature appears at 29 to 39 (ITPYDHVHVGH). Positions 213, 238, and 242 each coordinate Zn(2+). The short motif at 271–275 (KMSKS) is the 'KMSKS' region element. K274 serves as a coordination point for ATP.

This sequence belongs to the class-I aminoacyl-tRNA synthetase family. It depends on Zn(2+) as a cofactor.

The protein resides in the cytoplasm. It carries out the reaction tRNA(Cys) + L-cysteine + ATP = L-cysteinyl-tRNA(Cys) + AMP + diphosphate. This Pyrobaculum calidifontis (strain DSM 21063 / JCM 11548 / VA1) protein is Cysteine--tRNA ligase.